We begin with the raw amino-acid sequence, 912 residues long: Protein translocase subunit SecA (912 aa).

ATP is bound by residues Q87, 105-109 (GEGKT), and D508. A disordered region spans residues 855–912 (QHQDAGGYGADEEVEQMQGGNAPVPVSQVTRDEPKVGRNDPCPCGSGKKYKHCHGQLS). 4 residues coordinate Zn(2+): C896, C898, C907, and H908. Residues 902-912 (KKYKHCHGQLS) show a composition bias toward basic residues.

Belongs to the SecA family. Monomer and homodimer. Part of the essential Sec protein translocation apparatus which comprises SecA, SecYEG and auxiliary proteins SecDF-YajC and YidC. Requires Zn(2+) as cofactor.

The protein resides in the cell inner membrane. Its subcellular location is the cytoplasm. It carries out the reaction ATP + H2O + cellular proteinSide 1 = ADP + phosphate + cellular proteinSide 2.. In terms of biological role, part of the Sec protein translocase complex. Interacts with the SecYEG preprotein conducting channel. Has a central role in coupling the hydrolysis of ATP to the transfer of proteins into and across the cell membrane, serving both as a receptor for the preprotein-SecB complex and as an ATP-driven molecular motor driving the stepwise translocation of polypeptide chains across the membrane. This is Protein translocase subunit SecA from Xanthomonas campestris pv. campestris (strain 8004).